The primary structure comprises 315 residues: Rab effector Noc2 (315 aa).

The 118-residue stretch at 41–158 folds into the RabBD domain; sequence QRRKQHLSPA…KRSGAWFYKG (118 aa). The FYVE-type zinc-finger motif lies at 89-146; it reads GNGLSQCLLCGEVLGFLGSSSVFCKDCRKKVCTKCGIEASPGQKRPLWLCKICSEQRE. 8 residues coordinate Zn(2+): C95, C98, C112, C115, C120, C123, C138, and C141. The tract at residues 170-315 is disordered; it reads GRADDPHFRP…APAGPSSCLG (146 aa). Composition is skewed to basic and acidic residues over residues 184 to 193 and 221 to 240; these read PAEREPRSSE and LEDR…KPWK. Polar residues predominate over residues 262-275; that stretch reads GCQSSLASGETGTG. Over residues 298 to 315 the composition is skewed to low complexity; the sequence is GRAPAADAAPAGPSSCLG.

Recruited to dense-core vesicles through specific interaction with RAB27A in endocrine cells. Interacts with RAB3A, RAB3B, RAB3C and RAB3D. Interacts with ZYX. In terms of tissue distribution, moderate to high levels of expression in thyroid, ovary, stomach, heart, pancreas, skeletal muscle, kidney and liver. Also detected in epithelial cells.

Its subcellular location is the cytoplasm. The protein localises to the cytoplasmic vesicle. It localises to the secretory vesicle membrane. Its function is as follows. Rab GTPase effector involved in the late steps of regulated exocytosis, both in endocrine and exocrine cells. Acts as a potential RAB3B effector protein in epithelial cells. The polypeptide is Rab effector Noc2 (RPH3AL) (Homo sapiens (Human)).